The primary structure comprises 730 residues: DNA ligase (730 aa).

The segment at 1 to 23 is disordered; that stretch reads MAGEQHAQPTSVPAEAREKHAQL. NAD(+)-binding positions include 44-48, 93-94, and glutamate 124; these read DAEFD and SL. Catalysis depends on lysine 126, which acts as the N6-AMP-lysine intermediate. Residues arginine 147, glutamate 184, lysine 300, and lysine 324 each coordinate NAD(+). Zn(2+)-binding residues include cysteine 418, cysteine 421, cysteine 437, and cysteine 443. A BRCT domain is found at 638–727; the sequence is EGPRPLEGLT…PEAAAEVALP (90 aa).

It belongs to the NAD-dependent DNA ligase family. LigA subfamily. The cofactor is Mg(2+). Mn(2+) is required as a cofactor.

It carries out the reaction NAD(+) + (deoxyribonucleotide)n-3'-hydroxyl + 5'-phospho-(deoxyribonucleotide)m = (deoxyribonucleotide)n+m + AMP + beta-nicotinamide D-nucleotide.. Functionally, DNA ligase that catalyzes the formation of phosphodiester linkages between 5'-phosphoryl and 3'-hydroxyl groups in double-stranded DNA using NAD as a coenzyme and as the energy source for the reaction. It is essential for DNA replication and repair of damaged DNA. This is DNA ligase from Streptomyces avermitilis (strain ATCC 31267 / DSM 46492 / JCM 5070 / NBRC 14893 / NCIMB 12804 / NRRL 8165 / MA-4680).